We begin with the raw amino-acid sequence, 292 residues long: Troponin I (292 aa).

Serine 1 carries the N-acetylserine modification. The tract at residues 1–149 is disordered; sequence SSLEERRAAR…GLGGLSPEKK (149 aa). The span at 46 to 55 shows a compositional bias: low complexity; it reads YSAPAEPAYD. A compositionally biased stretch (basic and acidic residues) spans 58–134; sequence AENRRRQQQE…EARRMAEEQK (77 aa). Residues 237-250 are actin-binding; sequence DTKGKFVKPVLRKV. The disordered stretch occupies residues 255-292; it reads SKLDKIQRKEAKKSDFRDNLKSSREHEADKEGGEGENE.

Belongs to the troponin I family.

In terms of biological role, troponin I is the inhibitory subunit of troponin, the thin filament regulatory complex which confers calcium-sensitivity to striated muscle actomyosin ATPase activity. This chain is Troponin I, found in Chlamys nipponensis akazara (Akazara scallop).